Here is a 435-residue protein sequence, read N- to C-terminus: Membrane-bound ghrelin O-acyltransferase MBOAT4 (435 aa).

Over 1–5 (MDWLQ) the chain is Lumenal. The helical transmembrane segment at 6–26 (FFFLHPVSLYQGAAFPFALLF) threads the bilayer. Topologically, residues 27–40 (NYLCITESFPTRAR) are cytoplasmic. A helical membrane pass occupies residues 41–56 (YLFLLAGGGVLALAAM). The Lumenal segment spans residues 57-59 (GPY). Residues 60–76 (ALLIFIPALCAVAMISS) form a helical membrane-spanning segment. The Cytoplasmic segment spans residues 77-82 (LSPQEV). Residues 83-101 (HGLTFFFQMGWQTLCHLGL) form a helical membrane-spanning segment. Over 102 to 120 (HYKEYYLCEPPPVRFYITL) the chain is Lumenal. A helical membrane pass occupies residues 121-136 (SSLMLLTQRVTSLSLD). The Cytoplasmic segment spans residues 137-206 (ISEGKVEAAW…YPSISFWALT (70 aa)). A helical transmembrane segment spans residues 207–227 (WRGLQILGLECLKVALRRVVS). The Lumenal segment spans residues 228–240 (AGAGLDDCQRLEC). Residues 241–261 (IYIMWSTAGLFKLTYYSHWIL) traverse the membrane as a helical segment. Over 262 to 324 (DDSLLHAAGF…KRLVFQRSRR (63 aa)) the chain is Cytoplasmic. Active-site residues include Asn-307 and His-338. The helical transmembrane segment at 325-338 (WPVLQTFAFSAWWH) threads the bilayer. The Lumenal segment spans residues 339 to 340 (GL). The chain crosses the membrane as a helical span at residues 341-357 (HPGQVFGFLCWSVMVKA). The Cytoplasmic portion of the chain corresponds to 358-376 (DYLIHTFANGCIRSWPLRL). A helical membrane pass occupies residues 377-397 (LYRSLTWAHTQIIIAYVMLAV). The Lumenal segment spans residues 398 to 407 (EGRSFSSLCR). The helical transmembrane segment at 408–428 (LCCSYNSIFPVTYCLLLFLLA) threads the bilayer. At 429 to 435 (RRKHKCN) the chain is on the cytoplasmic side.

This sequence belongs to the membrane-bound acyltransferase family. In terms of assembly, monomer. In terms of processing, not glycosylated.

Its subcellular location is the endoplasmic reticulum membrane. It catalyses the reaction octanoyl-CoA + L-seryl-[protein] = O-octanoyl-L-seryl-[protein] + CoA. The catalysed reaction is decanoyl-CoA + L-seryl-[protein] = O-decanoyl-L-seryl-[protein] + CoA. It carries out the reaction L-seryl-[protein] + acetyl-CoA = O-acetyl-L-seryl-[protein] + CoA. The enzyme catalyses L-seryl-[protein] + butanoyl-CoA = O-butanoyl-L-seryl-[protein] + CoA. It catalyses the reaction pentanoyl-CoA + L-seryl-[protein] = O-pentanoyl-L-seryl-[protein] + CoA. The catalysed reaction is hexanoyl-CoA + L-seryl-[protein] = O-hexanoyl-L-seryl-[protein] + CoA. It carries out the reaction heptanoyl-CoA + L-seryl-[protein] = O-heptanoyl-L-seryl-[protein] + CoA. The enzyme catalyses nonanoyl-CoA + L-seryl-[protein] = O-nonanoyl-L-seryl-[protein] + CoA. It catalyses the reaction L-seryl-[protein] + dodecanoyl-CoA = O-dodecanoyl-L-seryl-[protein] + CoA. The catalysed reaction is L-seryl-[protein] + tetradecanoyl-CoA = O-tetradecanoyl-L-seryl-[protein] + CoA. It carries out the reaction a fatty acyl-CoA + L-seryl-[protein] = O-fatty acyl-L-seryl-[protein] + CoA. Its function is as follows. Catalyzes ghrelin acylation at 'Ser-3' using preferentially octanoyl-CoA, hexanoyl-CoA and decanoyl-CoA as acyl-CoA donors leading to ghrelin activity. In vitro uses also acyl-CoA donors of different lengths from short-chain (C2) to long-chain fatty acids (C16) knowing that acyl-CoA donors from butanoyl-CoA (C4) to dodecanoyl-CoA (C12) are more efficient compared to longer acyl-CoA donors, such as myristoyl-CoA (C14) and palmitoyl-CoA (C16) that are not efficient. In Rattus norvegicus (Rat), this protein is Membrane-bound ghrelin O-acyltransferase MBOAT4.